We begin with the raw amino-acid sequence, 402 residues long: Acetate kinase (402 aa).

Residue N7 participates in Mg(2+) binding. An ATP-binding site is contributed by K14. R95 lines the substrate pocket. The active-site Proton donor/acceptor is D152. ATP contacts are provided by residues 212-216, 286-288, and 334-338; these read HLGNG, DMR, and GIGEN. E388 lines the Mg(2+) pocket.

Belongs to the acetokinase family. In terms of assembly, homodimer. Mg(2+) serves as cofactor. It depends on Mn(2+) as a cofactor.

The protein localises to the cytoplasm. It carries out the reaction acetate + ATP = acetyl phosphate + ADP. The protein operates within metabolic intermediate biosynthesis; acetyl-CoA biosynthesis; acetyl-CoA from acetate: step 1/2. Functionally, catalyzes the formation of acetyl phosphate from acetate and ATP. Can also catalyze the reverse reaction. The sequence is that of Acetate kinase from Oleidesulfovibrio alaskensis (strain ATCC BAA-1058 / DSM 17464 / G20) (Desulfovibrio alaskensis).